We begin with the raw amino-acid sequence, 278 residues long: uncharacterized protein (278 aa).

NAD(+) contacts are provided by residues 112 to 113 (HI), 191 to 193 (VGR), and Asp217. The active site involves Arg193. Glu222 is a catalytic residue. His241 (proton donor) is an active-site residue. 241–244 (HSAG) contributes to the NAD(+) binding site.

Belongs to the D-isomer specific 2-hydroxyacid dehydrogenase family.

This is an uncharacterized protein from Streptomyces coelicolor.